Reading from the N-terminus, the 593-residue chain is Copine-5 (593 aa).

The C2 1 domain maps to 2 to 134 (EQPEDMASLS…SSGSRLEKPL (133 aa)). Position 19 is a phosphoserine (serine 19). Ca(2+) is bound by residues aspartate 38, aspartate 44, aspartate 98, aspartate 100, serine 103, lysine 108, and aspartate 110. Position 103 is a phosphoserine (serine 103). A Phosphoserine modification is found at serine 140. The region spanning 161–284 (KCGTIILSAE…ARGQSQFNIY (124 aa)) is the C2 2 domain. Residues aspartate 192, aspartate 198, aspartate 254, aspartate 256, and aspartate 262 each contribute to the Ca(2+) site. The VWFA domain maps to 328-554 (NFTVAIDFTA…DVLAEIPDQL (227 aa)). A disordered region spans residues 562–593 (GIRPRPPPAAPAQSPPQSPAHSPPGSPVHTHI). Residues 565-587 (PRPPPAAPAQSPPQSPAHSPPGS) are compositionally biased toward pro residues.

The protein belongs to the copine family. It depends on Ca(2+) as a cofactor. As to expression, expressed in the cerebra and cerebellum of newborn brain. Expressed in the eye, lung and muscles but weakly expressed in the adult brain (at protein level).

The protein localises to the perikaryon. The protein resides in the cell projection. Functionally, probable calcium-dependent phospholipid-binding protein that may play a role in calcium-mediated intracellular processes. Plays a role in dendrite formation by melanocytes. The polypeptide is Copine-5 (Mus musculus (Mouse)).